The primary structure comprises 541 residues: 3-oxoacyl-[acyl-carrier-protein] synthase II, chloroplastic (541 aa).

The transit peptide at 1-103 (MVGASSSYAS…NRNQRRLNRA (103 aa)) directs the protein to the chloroplast. In terms of domain architecture, Ketosynthase family 3 (KS3) spans 129-539 (QRRVVVTGMG…GHNSSIIFAP (411 aa)). Catalysis depends on for beta-ketoacyl synthase activity residues cysteine 292, histidine 432, and histidine 468.

It belongs to the thiolase-like superfamily. Beta-ketoacyl-ACP synthases family. As to quaternary structure, homodimer. As to expression, mostly expressed in siliques, and, to a lower extent, in leaves, stems, flower buds, and flowers.

It localises to the plastid. The protein localises to the chloroplast stroma. It catalyses the reaction a fatty acyl-[ACP] + malonyl-[ACP] + H(+) = a 3-oxoacyl-[ACP] + holo-[ACP] + CO2. Functionally, essential protein that catalyzes the condensation reaction of fatty acid synthesis by the addition to an acyl acceptor of two carbons from malonyl-ACP. Specific for elongation from C-16 and C-16 to unsaturated C-18 fatty acids. Confers resistance to low temperatures by maintaining chloroplast membranes integrity. Involved in the regulation of fatty acids ratios during seed metabolism. Required for embryo development, especially at the transition from the globular to the heart stage. The chain is 3-oxoacyl-[acyl-carrier-protein] synthase II, chloroplastic (KAS2) from Arabidopsis thaliana (Mouse-ear cress).